The following is a 172-amino-acid chain: Ubiquitin-conjugating enzyme E2 PEX4 (172 aa).

The region spanning 14-167 (SASKRLIKEL…VELWCQDSDS (154 aa)) is the UBC core domain. C104 serves as the catalytic Glycyl thioester intermediate.

Belongs to the ubiquitin-conjugating enzyme family.

It carries out the reaction S-ubiquitinyl-[E1 ubiquitin-activating enzyme]-L-cysteine + [E2 ubiquitin-conjugating enzyme]-L-cysteine = [E1 ubiquitin-activating enzyme]-L-cysteine + S-ubiquitinyl-[E2 ubiquitin-conjugating enzyme]-L-cysteine.. It participates in protein modification; protein ubiquitination. In terms of biological role, ubiquitin-conjugating enzyme E2 that is essential for peroxisome biogenesis and plays a key role in development, pathogenicity, and cell wall integrity. Required for long and very long-chain fatty acid utilization and is involved in lipid droplet accumulation and the elimination of reactive oxygen species. Controls the expression of proteins involved in protein biosynthesis, fatty acid metabolism, cell wall synthesis, oxidation-reduction reactions, as well as of the enzymes involved in the biosynthesis of the mycotoxin deoxynivalenol (DON), including TRI5, TRI6, and TRI10. This is Ubiquitin-conjugating enzyme E2 PEX4 from Gibberella zeae (strain ATCC MYA-4620 / CBS 123657 / FGSC 9075 / NRRL 31084 / PH-1) (Wheat head blight fungus).